The following is a 338-amino-acid chain: Sulfotransferase 2B1 (338 aa).

Residue 67-72 (KSGTNW) coordinates 3'-phosphoadenylyl sulfate. Residues W95 and W100 each contribute to the substrate site. H122 acts as the Proton acceptor in catalysis. Residues R144, S152, Y207, 241–246 (SAFAAM), and 271–273 (RKG) contribute to the 3'-phosphoadenylyl sulfate site. Positions 301–338 (VQRFPWDTSEEDSSPDGQPDPEPSPSPASDDPNPGSSQ) are disordered. Residues 327-338 (PASDDPNPGSSQ) show a composition bias toward low complexity.

The protein belongs to the sulfotransferase 1 family. Expressed at high levels in epididymis, intestine and uterus, and low levels in brain and hypothalamus. Isoform 2 is most prominent in the brain and spinal cord, with modest expression in the lung, skin and spleen. Isoform 1 is most prominently expressed in skin and small intestine, with modest expression in muscle and prostate.

It localises to the cytoplasm. Its subcellular location is the cytosol. It is found in the microsome. The protein resides in the nucleus. The enzyme catalyses an alcohol + 3'-phosphoadenylyl sulfate = an alkyl sulfate + adenosine 3',5'-bisphosphate + H(+). It catalyses the reaction pregnenolone + 3'-phosphoadenylyl sulfate = pregnenolone sulfate + adenosine 3',5'-bisphosphate + H(+). The catalysed reaction is 3beta-hydroxyandrost-5-en-17-one + 3'-phosphoadenylyl sulfate = dehydroepiandrosterone 3-sulfate + adenosine 3',5'-bisphosphate + H(+). It carries out the reaction cholesterol + 3'-phosphoadenylyl sulfate = cholesterol sulfate + adenosine 3',5'-bisphosphate + H(+). In terms of biological role, sulfotransferase that utilizes 3'-phospho-5'-adenylyl sulfate (PAPS) as sulfonate donor to catalyze the sulfate conjugation. Preferentially sulfonates cholesterol. Catalyzes sulfation of the 3beta-hydroxyl groups of steroids, such as, pregnenolone and dehydroepiandrosterone (DHEA). Cholesterol sulfation is approximately 10-fold higher than for pregnenolone and 20-fold higher than for DHEA. Plays a role in epidermal cholesterol metabolism and in the regulation of epidermal proliferation and differentiation. Its function is as follows. Strongly sulfonates pregnenolone, however is capable to sulfonate cholesterol with a high degree of efficiency. DHEA is a relatively poor substrate. The protein is Sulfotransferase 2B1 (Sult2b1) of Mus musculus (Mouse).